An 80-amino-acid polypeptide reads, in one-letter code: Defensin-like protein CAL1 (80 aa).

Residues 1-31 (MAPSRRMVASAFLLLAILVATEMGTTKVAEA) form the signal peptide. Intrachain disulfides connect cysteine 34–cysteine 80, cysteine 45–cysteine 65, cysteine 51–cysteine 74, and cysteine 55–cysteine 76.

This sequence belongs to the DEFL family. Expressed preferentially in root exodermis and xylem parenchyma cells in vasculature of root and flag leaf sheath.

It localises to the secreted. The protein localises to the extracellular space. Functionally, plant defensin-like protein involved in accumulation of cadmium (Cd) in rice leaves. Mediates Cd efflux from cytosol into extracellular spaces via chelation. This drives Cd secretion from xylem parenchyma cells into the xylem vessels, hence lowering Cd levels in cytosol meanwhile promoting Cd translocation from roots to shoots. The protein is Defensin-like protein CAL1 of Oryza sativa subsp. japonica (Rice).